A 90-amino-acid polypeptide reads, in one-letter code: uncharacterized protein (90 aa).

Residues 25 to 90 (GEAAYNSPTN…PPIAPPPILD (66 aa)) are disordered. 2 stretches are compositionally biased toward polar residues: residues 30 to 54 (NSPT…TESV) and 65 to 79 (NDQT…SNVN).

This is an uncharacterized protein from Bacillus subtilis (strain 168).